The chain runs to 886 residues: MPEQNPLPFPDGQSAPPSPAGAETGATAAALPPAAPVALDAPAPAAPVLAPARVAKRPWWARLLGRLADPWLSLTIEPEQPGRYDDGKPVVYVLEDYGLSNALILDKACREAGLPSPLVPLPGDPLERKRAYLALSRRSSSNSLIPEQRGGKTHSDSLAKLLQAHRVRADLDVHLVPVSIFVGRAPDKQSGWFAVLFSENWALVGRFRRLLSVLLNGRTTIVRFAPPISLRQTMAEGLPPERTLRKLQRVLRTHFRRIREAVIGPDLSTRRLLVDQVLAADSVREAIATQAKRDNSKPVDAWRKAHAYAWEIAADYSSPVVRSASFLLTHVWNRIYAGVLVHHLDKLKQAAPGHEVVYVPSHRSHMDYLLLSYLLYERGIVPPHIVAGINLNLPVVGTLLRKGGAFFIRRSIRGNALYSAVLSEYVAQLVAGGYSIEYFVEGGRSRTGRLLQPKGGMIAMTLRAYLRQPRKPVLFQPVYIGYEKLMEGNSYLDELTGRPKEKESIWGLLWSIPKVLKQNYGQVVVNFGEPIALNDVLAKHAPEWNGEPLPDDEKPTWLAPAVDTLATQIQTRINCAADVNPINLLALALLSTPKHAMGEADLIAQIELCKKLLAEMPYSDRVTVTPHTPARIITHAEEINVLTRVSHPLGDVLSVSGDTAVLLSYFRNNVLHLFTASSWVACCFQNNRRMSRAGLLRLGRTVYPFLQAELFLPWSEDRFAERIEQTIDMFVREGLLLNVTDDDGGILARNTGQTDEVFRLRAIGHSLQQAFERYYIAISVLVKNGPGVLGAGELESLCQQAAQRLSLLYAPAAPEFFDKTLFRSFIQKLRELRLVWPDENSKLMFDERLDAWAKDAKFILGRELRHTIERVSPEAAKPDVVSPPAE.

The interval 1–29 is disordered; sequence MPEQNPLPFPDGQSAPPSPAGAETGATAA. Over residues 20 to 29 the composition is skewed to low complexity; sequence AGAETGATAA. Residues 362–367 carry the HXXXXD motif motif; it reads HRSHMD.

Belongs to the GPAT/DAPAT family.

Its subcellular location is the cell inner membrane. It catalyses the reaction sn-glycerol 3-phosphate + an acyl-CoA = a 1-acyl-sn-glycero-3-phosphate + CoA. It participates in phospholipid metabolism; CDP-diacylglycerol biosynthesis; CDP-diacylglycerol from sn-glycerol 3-phosphate: step 1/3. The sequence is that of Glycerol-3-phosphate acyltransferase (plsB) from Xanthomonas campestris pv. campestris (strain ATCC 33913 / DSM 3586 / NCPPB 528 / LMG 568 / P 25).